The chain runs to 609 residues: X-ray repair cross-complementing protein 6 (609 aa).

A disordered region spans residues Met1 to Gly28. Ser2 is subject to N-acetylserine. The residue at position 2 (Ser2) is a Phosphoserine. The residue at position 6 (Ser6) is a Phosphoserine; by PRKDC. Acidic residues predominate over residues Gly12 to Leu24. Phosphoserine is present on Ser27. Residue Lys31 is the Schiff-base intermediate with DNA; for 5'-deoxyribose-5-phosphate lyase activity of the active site. Position 31 is an N6-acetyllysine (Lys31). A Phosphoserine; by PRKDC modification is found at Ser51. The Ku domain maps to Leu261–Lys468. The segment at Val277 to Asp341 is DNA-binding. A Glycyl lysine isopeptide (Lys-Gly) (interchain with G-Cter in SUMO2) cross-link involves residue Lys287. Residue Ser306 is modified to Phosphoserine. Lys317, Lys331, and Lys338 each carry N6-acetyllysine. Residue Lys317 forms a Glycyl lysine isopeptide (Lys-Gly) (interchain with G-Cter in SUMO2) linkage. Positions Ser373–Val482 are interaction with XRCC5. Position 455 is a phosphothreonine (Thr455). N6-acetyllysine is present on Lys461. Phosphoserine is present on residues Ser477 and Ser520. The tract at residues Pro536–Glu562 is disordered. An N6-acetyllysine mark is found at Lys539, Lys542, and Lys544. The residue at position 550 (Ser550) is a Phosphoserine. The tract at residues Ser550 to Asp609 is interaction with DEAF1. N6-acetyllysine is present on residues Lys553 and Lys556. Residue Lys556 forms a Glycyl lysine isopeptide (Lys-Gly) (interchain with G-Cter in SUMO2) linkage. Ser560 carries the phosphoserine modification. Residue Lys570 is modified to N6,N6,N6-trimethyllysine. Residues Leu573 to Phe607 enclose the SAP domain. An interaction with BAX region spans residues Val578 to Glu583.

Belongs to the ku70 family. Forms a heterodimer with XRCC5/Ku80; heterodimerization stabilizes XRCC5 protein. Component of the core long-range non-homologous end joining (NHEJ) complex (also named DNA-PK complex) composed of PRKDC, LIG4, XRCC4, XRCC6/Ku70, XRCC5/Ku86 and NHEJ1/XLF. Additional component of the NHEJ complex includes PAXX. Following autophosphorylation, PRKDC dissociates from DNA, leading to formation of the short-range NHEJ complex, composed of LIG4, XRCC4, XRCC6/Ku70, XRCC5/Ku86 and NHEJ1/XLF. The XRCC5-XRCC6 dimer also associates with NAA15, and this complex binds to the osteocalcin promoter and activates osteocalcin expression. In addition, XRCC6 interacts with the osteoblast-specific transcription factors MSX2, RUNX2 and DLX5. Interacts with ELF3. Interacts with ATP23. The XRCC5-XRRC6 dimer associates in a DNA-dependent manner with APEX1. Binds to CDK9 isoform 2. Identified in a complex with DEAF1 and XRCC5. Interacts with DEAF1 (via the SAND domain); the interaction is direct and may be inhibited by DNA-binding. Interacts with CLU. Interacts with NR4A3; the DNA-dependent protein kinase complex DNA-PK phosphorylates and activates NR4A3 and prevents NR4A3 ubiquitinylation and degradation. Interacts with CYREN isoform 1 (CYREN-1) and isoform 4 (CYREN-2) (via KBM motif). Interacts (via N-terminus) with HSF1 (via N-terminus); this interaction is direct and prevents XRCC5/XRCC6 heterodimeric binding and non-homologous end joining (NHEJ) repair activities induced by ionizing radiation (IR). Part of the HDP-RNP complex composed of at least HEXIM1, PRKDC, XRCC5, XRCC6, paraspeckle proteins (SFPQ, NONO, PSPC1, RBM14, and MATR3) and NEAT1 RNA. Interacts with HMBOX1. Interacts with ATF7. Interacts with APLF (via KBM motif). Interacts with WRN (via KBM motif). The XRCC5-XRCC6 dimer associates with ALKBH2. Interacts with TPRN; TPRN interacts with a number of DNA damage response proteins, is recruited to sites of DNA damage and may play a role in DNA damage repair. When not acetylated, interacts with BAX. Interacts with ERCC6L2. As to quaternary structure, (Microbial infection) Interacts with human T-cell leukemia virus 1/HTLV-1 protein HBZ. In terms of processing, phosphorylation by PRKDC may enhance helicase activity. Phosphorylation of Ser-51 does not affect DNA repair. ADP-ribosylated by PARP3. Post-translationally, methylation by SETD4 leads to accumulation in the cytoplasm and is a prerequisite for acetylation, possibly due to the change of subcellular from the nucleus to the cytosol initiated by methylation, acetylation occurring in the cytosol. In terms of processing, acetylation can be catalyzed in vitro by CREBBP/CBP and KAT2B/PCAF.

It is found in the nucleus. Its subcellular location is the chromosome. It localises to the cytoplasm. Its function is as follows. Single-stranded DNA-dependent ATP-dependent helicase that plays a key role in DNA non-homologous end joining (NHEJ) by recruiting DNA-PK to DNA. Required for double-strand break repair and V(D)J recombination. Also has a role in chromosome translocation. Has a role in chromosome translocation. The DNA helicase II complex binds preferentially to fork-like ends of double-stranded DNA in a cell cycle-dependent manner. It works in the 3'-5' direction. During NHEJ, the XRCC5-XRRC6 dimer performs the recognition step: it recognizes and binds to the broken ends of the DNA and protects them from further resection. Binding to DNA may be mediated by XRCC6. The XRCC5-XRRC6 dimer acts as a regulatory subunit of the DNA-dependent protein kinase complex DNA-PK by increasing the affinity of the catalytic subunit PRKDC to DNA by 100-fold. The XRCC5-XRRC6 dimer is probably involved in stabilizing broken DNA ends and bringing them together. The assembly of the DNA-PK complex to DNA ends is required for the NHEJ ligation step. Probably also acts as a 5'-deoxyribose-5-phosphate lyase (5'-dRP lyase), by catalyzing the beta-elimination of the 5' deoxyribose-5-phosphate at an abasic site near double-strand breaks. 5'-dRP lyase activity allows to 'clean' the termini of abasic sites, a class of nucleotide damage commonly associated with strand breaks, before such broken ends can be joined. The XRCC5-XRRC6 dimer together with APEX1 acts as a negative regulator of transcription. In association with NAA15, the XRCC5-XRRC6 dimer binds to the osteocalcin promoter and activates osteocalcin expression. Plays a role in the regulation of DNA virus-mediated innate immune response by assembling into the HDP-RNP complex, a complex that serves as a platform for IRF3 phosphorylation and subsequent innate immune response activation through the cGAS-STING pathway. Negatively regulates apoptosis by interacting with BAX and sequestering it from the mitochondria. Might have deubiquitination activity, acting on BAX. This is X-ray repair cross-complementing protein 6 (XRCC6) from Homo sapiens (Human).